The primary structure comprises 366 residues: Ribosomal RNA large subunit methyltransferase M (366 aa).

S-adenosyl-L-methionine contacts are provided by residues Ser188, 221–224, Asp240, Asp260, and Asp277; that span reads CPGG. The active-site Proton acceptor is Lys306.

Belongs to the class I-like SAM-binding methyltransferase superfamily. RNA methyltransferase RlmE family. RlmM subfamily. As to quaternary structure, monomer.

Its subcellular location is the cytoplasm. It catalyses the reaction cytidine(2498) in 23S rRNA + S-adenosyl-L-methionine = 2'-O-methylcytidine(2498) in 23S rRNA + S-adenosyl-L-homocysteine + H(+). Functionally, catalyzes the 2'-O-methylation at nucleotide C2498 in 23S rRNA. The chain is Ribosomal RNA large subunit methyltransferase M from Musicola paradisiaca (strain Ech703) (Dickeya paradisiaca).